Consider the following 372-residue polypeptide: Spermidine/putrescine import ATP-binding protein PotA (372 aa).

In terms of domain architecture, ABC transporter spans 12–242 (IQLKGLNKSF…PTNLFVARFI (231 aa)). 44 to 51 (GPSGCGKT) provides a ligand contact to ATP.

This sequence belongs to the ABC transporter superfamily. Spermidine/putrescine importer (TC 3.A.1.11.1) family. The complex is composed of two ATP-binding proteins (PotA), two transmembrane proteins (PotB and PotC) and a solute-binding protein (PotD).

The protein localises to the cell inner membrane. It catalyses the reaction ATP + H2O + polyamine-[polyamine-binding protein]Side 1 = ADP + phosphate + polyamineSide 2 + [polyamine-binding protein]Side 1.. Its function is as follows. Part of the ABC transporter complex PotABCD involved in spermidine/putrescine import. Responsible for energy coupling to the transport system. In Photobacterium profundum (strain SS9), this protein is Spermidine/putrescine import ATP-binding protein PotA.